Reading from the N-terminus, the 88-residue chain is Small ribosomal subunit protein bS20 (88 aa).

The protein belongs to the bacterial ribosomal protein bS20 family.

Functionally, binds directly to 16S ribosomal RNA. The protein is Small ribosomal subunit protein bS20 of Coprothermobacter proteolyticus (strain ATCC 35245 / DSM 5265 / OCM 4 / BT).